The chain runs to 274 residues: Large ribosomal subunit protein uL2 (274 aa).

2 disordered regions span residues 28–55 (APHA…RHVG) and 224–274 (VAMN…RRRK). Basic and acidic residues predominate over residues 263-274 (KRTDKMIVRRRK).

This sequence belongs to the universal ribosomal protein uL2 family. As to quaternary structure, part of the 50S ribosomal subunit. Forms a bridge to the 30S subunit in the 70S ribosome.

Functionally, one of the primary rRNA binding proteins. Required for association of the 30S and 50S subunits to form the 70S ribosome, for tRNA binding and peptide bond formation. It has been suggested to have peptidyltransferase activity; this is somewhat controversial. Makes several contacts with the 16S rRNA in the 70S ribosome. This is Large ribosomal subunit protein uL2 from Pseudomonas fluorescens (strain ATCC BAA-477 / NRRL B-23932 / Pf-5).